We begin with the raw amino-acid sequence, 208 residues long: Uracil phosphoribosyltransferase (208 aa).

5-phospho-alpha-D-ribose 1-diphosphate-binding positions include arginine 78, arginine 103, and 130 to 138; that span reads DPMLATGGS. Uracil contacts are provided by residues isoleucine 193 and 198 to 200; that span reads GDA. Aspartate 199 is a binding site for 5-phospho-alpha-D-ribose 1-diphosphate.

Belongs to the UPRTase family. Requires Mg(2+) as cofactor.

It catalyses the reaction UMP + diphosphate = 5-phospho-alpha-D-ribose 1-diphosphate + uracil. The protein operates within pyrimidine metabolism; UMP biosynthesis via salvage pathway; UMP from uracil: step 1/1. Allosterically activated by GTP. Catalyzes the conversion of uracil and 5-phospho-alpha-D-ribose 1-diphosphate (PRPP) to UMP and diphosphate. The protein is Uracil phosphoribosyltransferase of Photobacterium profundum (strain SS9).